A 423-amino-acid polypeptide reads, in one-letter code: Imidazolonepropionase (423 aa).

Positions 78 and 80 each coordinate Fe(3+). 2 residues coordinate Zn(2+): His-78 and His-80. 3 residues coordinate 4-imidazolone-5-propanoate: Arg-87, Tyr-150, and His-183. N-formimidoyl-L-glutamate is bound at residue Tyr-150. His-247 provides a ligand contact to Fe(3+). A Zn(2+)-binding site is contributed by His-247. Glu-250 is a 4-imidazolone-5-propanoate binding site. Asp-322 contributes to the Fe(3+) binding site. A Zn(2+)-binding site is contributed by Asp-322. Positions 324 and 326 each coordinate N-formimidoyl-L-glutamate. Ser-327 serves as a coordination point for 4-imidazolone-5-propanoate.

This sequence belongs to the metallo-dependent hydrolases superfamily. HutI family. Requires Zn(2+) as cofactor. It depends on Fe(3+) as a cofactor.

The protein localises to the cytoplasm. It catalyses the reaction 4-imidazolone-5-propanoate + H2O = N-formimidoyl-L-glutamate. Its pathway is amino-acid degradation; L-histidine degradation into L-glutamate; N-formimidoyl-L-glutamate from L-histidine: step 3/3. Its function is as follows. Catalyzes the hydrolytic cleavage of the carbon-nitrogen bond in imidazolone-5-propanoate to yield N-formimidoyl-L-glutamate. It is the third step in the universal histidine degradation pathway. This chain is Imidazolonepropionase, found in Bacillus mycoides (strain KBAB4) (Bacillus weihenstephanensis).